Consider the following 390-residue polypeptide: Putative glutamate--cysteine ligase 2 (390 aa).

The protein belongs to the glutamate--cysteine ligase type 2 family. YbdK subfamily.

It carries out the reaction L-cysteine + L-glutamate + ATP = gamma-L-glutamyl-L-cysteine + ADP + phosphate + H(+). Its function is as follows. ATP-dependent carboxylate-amine ligase which exhibits weak glutamate--cysteine ligase activity. This Chloroflexus aurantiacus (strain ATCC 29366 / DSM 635 / J-10-fl) protein is Putative glutamate--cysteine ligase 2.